The sequence spans 153 residues: Endoribonuclease YbeY (153 aa).

Zn(2+) contacts are provided by His114, His118, and His124.

The protein belongs to the endoribonuclease YbeY family. It depends on Zn(2+) as a cofactor.

It localises to the cytoplasm. Its function is as follows. Single strand-specific metallo-endoribonuclease involved in late-stage 70S ribosome quality control and in maturation of the 3' terminus of the 16S rRNA. The polypeptide is Endoribonuclease YbeY (Shewanella putrefaciens (strain CN-32 / ATCC BAA-453)).